Here is a 193-residue protein sequence, read N- to C-terminus: MTDYLLLFVGTVLVNNFVLVKFLGLCPFMGVSKKLETAMGMGLATTFVMTLASICAWLIDTWILIPLDLIYLRTLAFILVIAVVVQFTEMVVRKTSPALYRLLGIFLPLITTNCAVLGVALLNINLGHHFLQSALYGFSAAVGFSLVMVLFAAIRERLAVADVPAPFRGNAIALITAGLMSLAFMGFSGLVKL.

6 helical membrane passes run 5 to 25 (LLLFVGTVLVNNFVLVKFLGL), 47 to 67 (FVMTLASICAWLIDTWILIPL), 72 to 92 (LRTLAFILVIAVVVQFTEMVV), 102 to 122 (LLGIFLPLITTNCAVLGVALL), 134 to 154 (ALYGFSAAVGFSLVMVLFAAI), and 171 to 191 (AIALITAGLMSLAFMGFSGLV).

This sequence belongs to the NqrDE/RnfAE family. As to quaternary structure, the complex is composed of six subunits: RsxA, RsxB, RsxC, RsxD, RsxE and RsxG.

The protein localises to the cell inner membrane. Its function is as follows. Part of a membrane-bound complex that couples electron transfer with translocation of ions across the membrane. Required to maintain the reduced state of SoxR. The chain is Ion-translocating oxidoreductase complex subunit A from Salmonella agona (strain SL483).